The chain runs to 741 residues: Catalase-peroxidase (741 aa).

An N-terminal signal peptide occupies residues 1-23 (MLKKIVTALGMSGMLLASSNAIA). A cross-link (tryptophyl-tyrosyl-methioninium (Trp-Tyr) (with M-249)) is located at residues 102 to 223 (WHDAGTYRIY…YAATQMGLIY (122 aa)). Residue histidine 103 is the Proton acceptor of the active site. The tryptophyl-tyrosyl-methioninium (Tyr-Met) (with W-102) cross-link spans 223 to 249 (YVNPEGPDGKPDIKGAASEIRQAFRAM). Position 264 (histidine 264) interacts with heme b.

The protein belongs to the peroxidase family. Peroxidase/catalase subfamily. As to quaternary structure, homodimer or homotetramer. The cofactor is heme b. In terms of processing, formation of the three residue Trp-Tyr-Met cross-link is important for the catalase, but not the peroxidase activity of the enzyme.

The enzyme catalyses H2O2 + AH2 = A + 2 H2O. It catalyses the reaction 2 H2O2 = O2 + 2 H2O. Bifunctional enzyme with both catalase and broad-spectrum peroxidase activity. This chain is Catalase-peroxidase, found in Francisella tularensis subsp. tularensis (strain WY96-3418).